We begin with the raw amino-acid sequence, 228 residues long: MAFLSPLPPPPENEQQLFERAQQLAGCSLGELAEGARLAIPRDLKRDKGWVGMLLEQYLGAMAGSKPEQDFPELGIELKTIPIDAAGKPLETTFVCVAPLTGNSGVTWASSHVRHKLARVLWIPVEGERQIPLAQRRIGSPLLWSPNAEEEEMLRRDWEELMDLIVLGHVERITARHGEVLQLRPKAANSKALTEAIGEQGQPILTLPRGFYLKKSFTGALLARHFFV.

It belongs to the MutH family.

Its subcellular location is the cytoplasm. Sequence-specific endonuclease that cleaves unmethylated GATC sequences. It is involved in DNA mismatch repair. The polypeptide is DNA mismatch repair protein MutH (Serratia proteamaculans (strain 568)).